Here is a 199-residue protein sequence, read N- to C-terminus: Recombination protein RecR (199 aa).

The C4-type zinc-finger motif lies at 58–73 (CSVCTNLTDRDPCRIC). The Toprim domain maps to 81–176 (AVICVVEEPR…KVTRIAHGLP (96 aa)).

The protein belongs to the RecR family.

Its function is as follows. May play a role in DNA repair. It seems to be involved in an RecBC-independent recombinational process of DNA repair. It may act with RecF and RecO. In Heliobacterium modesticaldum (strain ATCC 51547 / Ice1), this protein is Recombination protein RecR.